The sequence spans 1130 residues: MHC class II transactivator (1130 aa).

The interval A94–M132 is required for acetyltransferase activity. Positions P269–P303 are disordered. The NACHT domain occupies R414–L724. G420–S427 provides a ligand contact to GTP. LRR repeat units follow at residues S985–S1008, S1016–E1037, S1045–R1066, and S1073–A1093.

In terms of assembly, interacts with ZXDA and ZXDC. Interacts with PML (isoform PML-2). Interacts with TAF7; interaction inhibits CIITA acetyltransferase activity, thereby repressing transcription. Autophosphorylated, affecting interaction with TAF7.

It localises to the nucleus. The protein resides in the PML body. It catalyses the reaction L-seryl-[protein] + ATP = O-phospho-L-seryl-[protein] + ADP + H(+). The enzyme catalyses L-threonyl-[protein] + ATP = O-phospho-L-threonyl-[protein] + ADP + H(+). In terms of biological role, essential for transcriptional activity of the HLA class II promoter; activation is via the proximal promoter. Does not bind DNA. May act in a coactivator-like fashion through protein-protein interactions by contacting factors binding to the proximal MHC class II promoter, to elements of the transcription machinery, or both PubMed:8402893, PubMed:7749984,. Alternatively it may activate HLA class II transcription by modifying proteins that bind to the MHC class II promoter. Also mediates enhanced MHC class I transcription; the promoter element requirements for CIITA-mediated transcription are distinct from those of constitutive MHC class I transcription, and CIITA can functionally replace TAF1 at these genes. Activates CD74 transcription. Exhibits intrinsic GTP-stimulated acetyltransferase activity. Exhibits serine/threonine protein kinase activity: can phosphorylate the TFIID component TAF7, the RAP74 subunit of the general transcription factor TFIIF, histone H2B at 'Ser-37' and other histones (in vitro). Has antiviral activity against Ebola virus and coronaviruses, including SARS-CoV-2. Induces resistance by up-regulation of the p41 isoform of CD74, which blocks cathepsin-mediated cleavage of viral glycoproteins, thereby preventing viral fusion. Exhibits dominant-negative suppression of MHC class II gene expression. The sequence is that of MHC class II transactivator from Homo sapiens (Human).